The following is a 107-amino-acid chain: RNA polymerase II transcriptional coactivator KIWI (107 aa).

The segment at 1–40 (MSSRGKRKDEDVRASDDESETHAPAKKVAKPADDSDQSDD) is disordered. Residues 7–23 (RKDEDVRASDDESETHA) show a composition bias toward basic and acidic residues.

The protein belongs to the transcriptional coactivator PC4 family.

The protein resides in the nucleus. Its function is as follows. General coactivator that functions cooperatively with TAFs and mediates functional interactions between upstream activators and the general transcriptional machinery. Binds single-stranded DNA. The sequence is that of RNA polymerase II transcriptional coactivator KIWI (KIWI) from Arabidopsis thaliana (Mouse-ear cress).